Consider the following 93-residue polypeptide: Conotoxin F_Vc1 (93 aa).

The N-terminal stretch at 1-22 (MQRGAVLLGVVAFLALWPQAGA) is a signal peptide. Residues 23-33 (EPYNLNDPDVR) constitute a propeptide that is removed on maturation.

The protein belongs to the conotoxin F superfamily. Contains 4 disulfide bonds. In terms of tissue distribution, expressed by the venom duct.

It localises to the secreted. The protein is Conotoxin F_Vc1 of Conus victoriae (Queen Victoria cone).